A 908-amino-acid chain; its full sequence is Alanine--tRNA ligase (908 aa).

Residues histidine 596, histidine 600, cysteine 698, and histidine 702 each contribute to the Zn(2+) site.

It belongs to the class-II aminoacyl-tRNA synthetase family. Requires Zn(2+) as cofactor.

It is found in the cytoplasm. It catalyses the reaction tRNA(Ala) + L-alanine + ATP = L-alanyl-tRNA(Ala) + AMP + diphosphate. Functionally, catalyzes the attachment of alanine to tRNA(Ala) in a two-step reaction: alanine is first activated by ATP to form Ala-AMP and then transferred to the acceptor end of tRNA(Ala). Also edits incorrectly charged Ser-tRNA(Ala) and Gly-tRNA(Ala) via its editing domain. This chain is Alanine--tRNA ligase, found in Lysinibacillus sphaericus (strain C3-41).